The chain runs to 289 residues: Bis(5'-nucleosyl)-tetraphosphatase, symmetrical (289 aa).

This sequence belongs to the Ap4A hydrolase family.

The catalysed reaction is P(1),P(4)-bis(5'-adenosyl) tetraphosphate + H2O = 2 ADP + 2 H(+). Hydrolyzes diadenosine 5',5'''-P1,P4-tetraphosphate to yield ADP. This is Bis(5'-nucleosyl)-tetraphosphatase, symmetrical from Yersinia pseudotuberculosis serotype O:3 (strain YPIII).